A 343-amino-acid chain; its full sequence is UDP-3-O-acylglucosamine N-acyltransferase (343 aa).

The Proton acceptor role is filled by His-237.

The protein belongs to the transferase hexapeptide repeat family. LpxD subfamily. In terms of assembly, homotrimer.

The catalysed reaction is a UDP-3-O-[(3R)-3-hydroxyacyl]-alpha-D-glucosamine + a (3R)-hydroxyacyl-[ACP] = a UDP-2-N,3-O-bis[(3R)-3-hydroxyacyl]-alpha-D-glucosamine + holo-[ACP] + H(+). Its pathway is bacterial outer membrane biogenesis; LPS lipid A biosynthesis. Its function is as follows. Catalyzes the N-acylation of UDP-3-O-acylglucosamine using 3-hydroxyacyl-ACP as the acyl donor. Is involved in the biosynthesis of lipid A, a phosphorylated glycolipid that anchors the lipopolysaccharide to the outer membrane of the cell. The chain is UDP-3-O-acylglucosamine N-acyltransferase from Synechococcus sp. (strain JA-3-3Ab) (Cyanobacteria bacterium Yellowstone A-Prime).